The chain runs to 219 residues: Transmembrane emp24 domain-containing protein 10 (219 aa).

Residues 1–31 (MSGSSGPQAQRGPCPFALLLLLLLGPSSVLA) form the signal peptide. Residues 1-142 (MSGSSGPQAQ…KNYEEIAKVE (142 aa)) are required for interaction with STX17. Over 32-185 (ISFHLPVNSR…RDTNESTNTR (154 aa)) the chain is Lumenal. Residues 41 to 193 (RKCLREEIHK…TRVLYFSIFS (153 aa)) enclose the GOLD domain. The required for TMED10 and TMED2 cis-Golgi network localization stretch occupies residues 147 to 178 (LEVELRRLEDLSESIVNDFAYMKKREEEMRDT). R171 and R176 each carry dimethylated arginine. Residue N179 is glycosylated (N-linked (GlcNAc...) asparagine). The chain crosses the membrane as a helical span at residues 186 to 206 (VLYFSIFSMFCLIGLATWQVF). An interaction with COPG1 region spans residues 204–219 (QVFYLRRFFKAKKLIE). At 207–219 (YLRRFFKAKKLIE) the chain is on the cytoplasmic side. An interaction with ARF1 and IL1B region spans residues 207–219 (YLRRFFKAKKLIE). The COPII vesicle coat-binding signature appears at 211 to 212 (FF). The COPI vesicle coat-binding signature appears at 211–219 (FFKAKKLIE).

The protein belongs to the EMP24/GP25L family. Predominantly dimeric and to a lesser extent monomeric in the ER. Monomer and dimer in ERGIC and cis-Golgi network. Forms homooligomer (via GOLD domain); the assembly is promoted by direct binding with leaderless cargos and may form a protein channel that facilitates cargo entry into the ERGIC. Forms heterooligomeric complexes with other members of the p24 family such as TMED2, TMED7 and TMED9. Interacts (via GOLD domain) with TMED2 (via GOLD domain); the complex is required for export of TMED10 from the ER to the cis-Golgi network; the complex is proposed to be involved in cis-Golgi network dynamics and / or biogenesis. Associates with the COPI vesicle coat subunits (coatomer). Tetramerization of the cytoplasmic domain at the Golgi membrane in vitro; the complex is proposed to interact with COPI coatomer and induce budding of the vesicles. Interacts with COPG1; the interaction involves TMED10 homodimer. Interacts with ARF1 (GDP-bound); the interaction probably involves a TMED10 oligomer. Interacts with SEC23A, SEC24B, SEC24C and SEC24D components of the coat protein complex II/COPII, indicative of an association of TMED10 with the COPII vesicle coat. Interacts with CD59. Interacts with MPPE1/PGAP5; the complex might recruit and sort GPI-anchored proteins to the ER-exit site, or the interaction might lead to recycling of PGAP5 between the ER and the Golgi. Interacts with F2LR1/PAR2. Interacts with KDELR2/ERD2; the interaction is disrupted by KDELR2 ligand. Found in a complex composed at least of SURF4, TMED2 and TMED10. Associates with the presenilin-dependent gamma-secretase complex. Interacts with STX17; the interaction is direct. Interacts with IL-1; the interaction is direct. Interacts with RAB21 (active GTP-bound form); the interaction is indirect and regulates TMED10 abundance and localization at the Golgi.

Its subcellular location is the endoplasmic reticulum membrane. The protein localises to the endoplasmic reticulum-Golgi intermediate compartment membrane. It is found in the golgi apparatus membrane. It localises to the golgi apparatus. The protein resides in the cis-Golgi network membrane. Its subcellular location is the trans-Golgi network membrane. The protein localises to the cytoplasmic vesicle. It is found in the secretory vesicle membrane. It localises to the cell membrane. The protein resides in the melanosome. Functionally, cargo receptor involved in protein vesicular trafficking and quality control in the endoplasmic reticulum (ER) and Golgi. The p24 protein family is a group of transmembrane proteins that bind coat protein complex I/COPI and coat protein complex II/COPII involved in vesicular trafficking between the membranes. Acts at the lumenal side for incorporation of secretory cargo molecules into transport vesicles and involved in vesicle coat formation at the cytoplasmic side. Mainly functions in the early secretory pathway and cycles between the ER, ER-Golgi intermediate compartment (ERGIC) and Golgi, mediating cargo transport through COPI and COPII-coated vesicles. In COPII vesicle-mediated anterograde transport, involved in the transport of GPI-anchored proteins by acting together with TMED2 as their cargo receptor; the function specifically implies SEC24C and SEC24D of the COPII vesicle coat and lipid raft-like microdomains of the ER. Recognizes GPI anchors structural remodeled in the ER by the GPI inositol-deacylase/PGAP1 and the metallophosphoesterase MPPE1/PGAP5. In COPI vesicle-mediated retrograde transport, involved in the biogenesis of COPI vesicles and vesicle coat recruitment. Involved in trafficking of amyloid beta A4 protein and soluble APP-beta release (independent from the modulation of gamma-secretase activity). Involved in the KDELR2-mediated retrograde transport of the toxin A subunit (CTX-A-K63)together with COPI and the COOH terminus of KDELR2. On Golgi membranes, acts as a primary receptor for ARF1-GDP, a GTP-binding protein involved in COPI-vesicle formation. Increases coatomer-dependent GTPase-activating activity of ARFGAP2 which mediates the hydrolysis of ARF1-bound GTP and therefore modulates protein trafficking from the Golgi apparatus. Involved in the exocytic trafficking of G protein-coupled receptors F2LR1/PAR2 (trypsin and tryspin-like enzyme receptor), OPRM1 (opioid receptor) and P2RY4 (UTD and UDP receptor) from the Golgi to the plasma membrane, thus contributing to receptor resensitization. In addition to its cargo receptor activity, may also act as a protein channel after oligomerization, facilitating the post-translational entry of leaderless cytoplasmic cargo into the ERGIC. Involved in the translocation into ERGIC, the vesicle entry and the secretion of leaderless cargos (lacking the secretion signal sequence), including the mature form of interleukin 1/IL-1 family members, the alpha-crystallin B chain HSPB5, the carbohydrate-binding proteins galectin-1/LGALS1 and galectin-3/LGALS3, the microtubule-associated protein Tau/MAPT, and the annexin A1/ANXA1; the translocation process is dependent on cargo protein unfolding and enhanced by chaperones HSP90AB1 and HSP90B1/GRP9. Could also associates with the presenilin-dependent gamma-secretase complex in order to regulate gamma-cleavages of the amyloid beta A4 protein to yield amyloid-beta 40/Abeta40. The polypeptide is Transmembrane emp24 domain-containing protein 10 (TMED10) (Bos taurus (Bovine)).